Here is a 513-residue protein sequence, read N- to C-terminus: GMP synthase [glutamine-hydrolyzing] (513 aa).

The Glutamine amidotransferase type-1 domain maps to 8–198 (MILVLDFGSQ…VFGVCECVGE (191 aa)). Cys-85 serves as the catalytic Nucleophile. Active-site residues include His-172 and Glu-174. The GMPS ATP-PPase domain maps to 199-388 (WSMENFIEIE…LGIPDEIVWR (190 aa)). 226–232 (SGGVDSS) contributes to the ATP binding site.

Homodimer.

The catalysed reaction is XMP + L-glutamine + ATP + H2O = GMP + L-glutamate + AMP + diphosphate + 2 H(+). The protein operates within purine metabolism; GMP biosynthesis; GMP from XMP (L-Gln route): step 1/1. Its function is as follows. Catalyzes the synthesis of GMP from XMP. The polypeptide is GMP synthase [glutamine-hydrolyzing] (Bacillus licheniformis (strain ATCC 14580 / DSM 13 / JCM 2505 / CCUG 7422 / NBRC 12200 / NCIMB 9375 / NCTC 10341 / NRRL NRS-1264 / Gibson 46)).